Here is a 160-residue protein sequence, read N- to C-terminus: Type-1 angiotensin II receptor-associated protein (160 aa).

Residues 1-9 are Extracellular-facing; the sequence is MELPAVNLK. The helical transmembrane segment at 10–30 threads the bilayer; that stretch reads VILLVHWLLTTWGCLAFSGSY. Topologically, residues 31–53 are cytoplasmic; it reads AWGNFTILALGVWAVAQRDSVDA. A helical transmembrane segment spans residues 54–74; that stretch reads IGMFLGGLVATIFLDIIYISI. Topologically, residues 75–86 are extracellular; that stretch reads FYSSVAVGDTGR. A helical membrane pass occupies residues 87-107; it reads FSAGMAIFSLLLKPFSCCLVY. The Cytoplasmic segment spans residues 108–160; it reads HMHRERGGELPLRSDFFGPSQEHSAYQTIDSSDSPADPLASLENKGQAAPRGY. The interaction with AGTR1 stretch occupies residues 110–122; sequence HRERGGELPLRSD. Phosphoserine is present on Ser127. Residues 128–160 are disordered; sequence QEHSAYQTIDSSDSPADPLASLENKGQAAPRGY. Thr135 bears the Phosphothreonine mark. Residues 137–149 are compositionally biased toward low complexity; sequence DSSDSPADPLASL. Ser138 carries the phosphoserine modification.

Interacts with RACK1, and with the carboxy-terminal region of AGTR1.

It localises to the endoplasmic reticulum membrane. The protein localises to the golgi apparatus membrane. Its subcellular location is the cytoplasmic vesicle membrane. In terms of biological role, appears to be a negative regulator of type-1 angiotensin II receptor-mediated signaling by regulating receptor internalization as well as mechanism of receptor desensitization such as phosphorylation. May play a role of negative regulator in cardiomyocyte hypertrophy induced by angiotensin II through an inhibition of p38 mitogen-activated protein kinase pathway. Attenuates type-1 angiotensin II receptor growth promoting effect and angiotensin II-induced phosphorylation of protein kinase AKT and of STAT3. This is Type-1 angiotensin II receptor-associated protein (Agtrap) from Rattus norvegicus (Rat).